A 91-amino-acid chain; its full sequence is UPF0512 protein F (91 aa).

Belongs to the UPF0512 family.

This is UPF0512 protein F from Dictyostelium discoideum (Social amoeba).